The sequence spans 235 residues: Urease accessory protein UreF (235 aa).

It belongs to the UreF family. UreD, UreF and UreG form a complex that acts as a GTP-hydrolysis-dependent molecular chaperone, activating the urease apoprotein by helping to assemble the nickel containing metallocenter of UreC. The UreE protein probably delivers the nickel.

The protein resides in the cytoplasm. Functionally, required for maturation of urease via the functional incorporation of the urease nickel metallocenter. The chain is Urease accessory protein UreF from Haemophilus influenzae (strain PittGG).